A 124-amino-acid chain; its full sequence is MRFSIATVVLSLAAMVVAIPTTESTLFARGGGQTCAQGQTLSCCQSVTSGGDGILGNLLGLNCAEIPIPIVGIVLGGKCNSAPVCCNVNGGSTSPDCDDNSNNGGTQGGINVLTNSCVAIPIVL.

Residues 1–18 (MRFSIATVVLSLAAMVVA) form the signal peptide. 4 disulfides stabilise this stretch: C35–C85, C43–C79, C44–C63, and C86–C97.

This sequence belongs to the fungal hydrophobin family.

The protein localises to the secreted. It localises to the cell wall. Functionally, aerial growth, conidiation, and dispersal of filamentous fungi in the environment rely upon a capability of their secreting small amphipathic proteins called hydrophobins (HPBs) with low sequence identity. Class I can self-assemble into an outermost layer of rodlet bundles on aerial cell surfaces, conferring cellular hydrophobicity that supports fungal growth, development and dispersal; whereas Class II form highly ordered films at water-air interfaces through intermolecular interactions but contribute nothing to the rodlet structure. In Botryotinia fuckeliana, hydrophobins are not involved in conferring surface hydrophobicity to conidia and aerial hyphae and their function in sclerotia and fruiting bodies remains to be investigated. The protein is Class I hydrophobin 1 (Bhp1) of Botryotinia fuckeliana (strain B05.10) (Noble rot fungus).